Reading from the N-terminus, the 347-residue chain is Cell shape-determining protein MreB (347 aa).

Residues 19-21, 165-167, 213-216, and 295-298 contribute to the ATP site; these read TAN, GGT, ERIK, and GGAL.

The protein belongs to the FtsA/MreB family. Forms polymers in the presence of ATP. Forms pairs of protofilaments that adopt an antiparallel arrangement and bind to lipids.

It localises to the cytoplasm. Forms membrane-associated dynamic filaments that are essential for cell shape determination. Acts by regulating cell wall synthesis and cell elongation, and thus cell shape. A feedback loop between cell geometry and MreB localization may maintain elongated cell shape by targeting cell wall growth to regions of negative cell wall curvature. Required for mid-cell peptidoglycan synthesis and cell division. Directs the localization of the cytosolic peptidoglycan precursor-synthesizing enzyme MurG. Also required for proper chromosome segregation. Directs the segregation of origin-proximal but not origin-distal loci. The polypeptide is Cell shape-determining protein MreB (Caulobacter vibrioides (strain NA1000 / CB15N) (Caulobacter crescentus)).